The following is a 410-amino-acid chain: 2-oxoglutarate-dependent dioxygenase AOP3 (410 aa).

The 98-residue stretch at 258 to 355 (GNASVGAKEA…RYAAALFSNP (98 aa)) folds into the Fe2OG dioxygenase domain. H278, D280, and H335 together coordinate Fe cation. R346 is a binding site for 2-oxoglutarate.

This sequence belongs to the iron/ascorbate-dependent oxidoreductase family. It depends on Fe(2+) as a cofactor.

Its function is as follows. 2-oxoglutarate-dependent dioxygenase involved in glucosinolates biosynthesis. Catalyzes the conversion of methylsulfinylalkyl glucosinolates to hydroxyalkyl glucosinolates. This chain is 2-oxoglutarate-dependent dioxygenase AOP3 (AOP3), found in Arabidopsis thaliana (Mouse-ear cress).